Reading from the N-terminus, the 362-residue chain is PDZ and LIM domain protein 3 (362 aa).

In terms of domain architecture, PDZ spans 1–84 (MPQNVVLPGP…QLCLKIDRAE (84 aa)). Residues Ser-18, Ser-92, and Ser-263 each carry the phosphoserine modification. The interval 261–282 (DGSDDRPAGTRSVRPVTKVHGG) is disordered. The region spanning 290 to 349 (PLCDKCGSGIVGAVVKARDKYRHPECFVCADCNLNLKQKGYFFVEGELYCEMHARARTRP) is the LIM zinc-binding domain.

In terms of assembly, interacts with ACTN2. Forms a heterodimer with PDLIM4 (via LIM domain). In terms of tissue distribution, highly expressed in skeletal muscle and at low levels in the heart.

It is found in the cytoplasm. Its subcellular location is the myofibril. It localises to the sarcomere. The protein localises to the z line. In terms of biological role, may play a role in the organization of actin filament arrays within muscle cells. The protein is PDZ and LIM domain protein 3 (Pdlim3) of Rattus norvegicus (Rat).